The primary structure comprises 471 residues: Heat shock 70 kDa protein 13 (471 aa).

A signal peptide spans 1 to 22; that stretch reads MAREMTILGSAVLTLLLAGYLA. The tract at residues 314 to 352 is disordered; it reads EEQDRKEPHSSDTELPKDKLSSADDHRVNSGFGRGLSDK. The span at 315 to 341 shows a compositional bias: basic and acidic residues; that stretch reads EQDRKEPHSSDTELPKDKLSSADDHRV.

It belongs to the heat shock protein 70 family. As to quaternary structure, binds UBQLN2.

The protein localises to the microsome. It is found in the endoplasmic reticulum. Functionally, has peptide-independent ATPase activity. The sequence is that of Heat shock 70 kDa protein 13 (HSPA13) from Pongo abelii (Sumatran orangutan).